A 138-amino-acid chain; its full sequence is Large ribosomal subunit protein uL16 (138 aa).

Belongs to the universal ribosomal protein uL16 family. In terms of assembly, part of the 50S ribosomal subunit.

Binds 23S rRNA and is also seen to make contacts with the A and possibly P site tRNAs. This Acholeplasma laidlawii (strain PG-8A) protein is Large ribosomal subunit protein uL16.